Consider the following 346-residue polypeptide: NADH-ubiquinone oxidoreductase chain 2 (346 aa).

10 helical membrane-spanning segments follow: residues 25–45 (HWIL…PLIS), 52–72 (AIEA…LILF), 95–115 (CLML…HFWF), 124–144 (LITA…LLLL), 149–169 (LNTT…GWMG), 178–198 (ILAF…SYNP), 200–220 (LTIL…LSLA), 242–262 (ATVM…GFMP), 274–294 (EMTP…FFYL), and 326–346 (AILT…ITML).

It belongs to the complex I subunit 2 family. In terms of assembly, core subunit of respiratory chain NADH dehydrogenase (Complex I) which is composed of 45 different subunits.

It localises to the mitochondrion inner membrane. It carries out the reaction a ubiquinone + NADH + 5 H(+)(in) = a ubiquinol + NAD(+) + 4 H(+)(out). Functionally, core subunit of the mitochondrial membrane respiratory chain NADH dehydrogenase (Complex I) which catalyzes electron transfer from NADH through the respiratory chain, using ubiquinone as an electron acceptor. Essential for the catalytic activity and assembly of complex I. This Gallus gallus (Chicken) protein is NADH-ubiquinone oxidoreductase chain 2 (MT-ND2).